The sequence spans 159 residues: Ecotin (159 aa).

Positions 1 to 22 (MRPTPMTAILALTLAAAAPAMA) are cleaved as a signal peptide. An intrachain disulfide couples Cys-68 to Cys-105.

The protein belongs to the protease inhibitor I11 (ecotin) family. As to quaternary structure, homodimer.

It is found in the periplasm. Functionally, general inhibitor of family S1 serine proteases. This is Ecotin from Pseudomonas putida (strain GB-1).